The chain runs to 1829 residues: DNA polymerase (1829 aa).

DOD-type homing endonuclease domains follow at residues 527–668 (LSGI…SLGI) and 1136–1269 (FLGY…SLGV).

The protein belongs to the DNA polymerase type-B family. This protein undergoes a protein self splicing that involves a post-translational excision of the three intervening regions (inteins) followed by peptide ligation.

The enzyme catalyses DNA(n) + a 2'-deoxyribonucleoside 5'-triphosphate = DNA(n+1) + diphosphate. In Thermococcus aggregans, this protein is DNA polymerase (pol).